The primary structure comprises 60 residues: Large ribosomal subunit protein eL37 (60 aa).

Residues cysteine 18, cysteine 21, cysteine 33, and cysteine 36 each contribute to the Zn(2+) site. The C4-type zinc-finger motif lies at 18-36; that stretch reads CRRCGKNSYHVRKKVCAAC.

The protein belongs to the eukaryotic ribosomal protein eL37 family. Zn(2+) serves as cofactor.

In terms of biological role, binds to the 23S rRNA. The polypeptide is Large ribosomal subunit protein eL37 (rpl37e) (Methanothermobacter thermautotrophicus (strain ATCC 29096 / DSM 1053 / JCM 10044 / NBRC 100330 / Delta H) (Methanobacterium thermoautotrophicum)).